The sequence spans 228 residues: A-type ATP synthase subunit D (228 aa).

A compositionally biased stretch (basic and acidic residues) spans 205–214 (KKEEEEKAEA). The disordered stretch occupies residues 205–228 (KKEEEEKAEAAAEAAAVEDPEPAD).

Belongs to the V-ATPase D subunit family. As to quaternary structure, has multiple subunits with at least A(3), B(3), C, D, E, F, H, I and proteolipid K(x).

The protein localises to the cell membrane. Component of the A-type ATP synthase that produces ATP from ADP in the presence of a proton gradient across the membrane. This Halorubrum lacusprofundi (strain ATCC 49239 / DSM 5036 / JCM 8891 / ACAM 34) protein is A-type ATP synthase subunit D.